The primary structure comprises 218 residues: Ras-related protein Rab-27B (218 aa).

Threonine 2 bears the N-acetylthreonine mark. 16-24 contacts GTP; that stretch reads GDSGVGKTT. An Effector region motif is present at residues 38–46; sequence FITTVGIDF. GTP contacts are provided by residues 74–78, 133–136, and 163–165; these read DTAGQ, NKAD, and SAA. A disulfide bridge links cysteine 123 with cysteine 188. The tract at residues 193–218 is disordered; it reads HIPDTVNGSSSGKLDGEKSAEKKCAC. The segment covering 206 to 218 has biased composition (basic and acidic residues); it reads LDGEKSAEKKCAC. S-geranylgeranyl cysteine attachment occurs at residues cysteine 216 and cysteine 218. The residue at position 218 (cysteine 218) is a Cysteine methyl ester.

Belongs to the small GTPase superfamily. Rab family. In terms of assembly, interacts with SYTL2, SYTL4, MYRIP and MLPH. Interacts with RPH3A and RPH3A. Interacts (GDP-bound form preferentially) with DENND10. In terms of tissue distribution, expressed at an extraordinary high level (0.1% of total protein) in urothelium.

Its subcellular location is the membrane. It localises to the late endosome. The catalysed reaction is GTP + H2O = GDP + phosphate + H(+). With respect to regulation, regulated by guanine nucleotide exchange factors (GEFs) which promote the exchange of bound GDP for free GTP, GTPase activating proteins (GAPs) which increase the GTP hydrolysis activity, and GDP dissociation inhibitors which inhibit the dissociation of the nucleotide from the GTPase. Activated by GEFs such as DENND10. In terms of biological role, small GTPase which cycles between active GTP-bound and inactive GDP-bound states. In its active state, binds to a variety of effector proteins to regulate homeostasis of late endocytic pathway, including endosomal positioning, maturation and secretion. Plays a role in NTRK2/TRKB axonal anterograde transport by facilitating the association of NTRK2/TRKB with KLC1. May be involved in targeting uroplakins to urothelial apical membranes. The protein is Ras-related protein Rab-27B (RAB27B) of Bos taurus (Bovine).